A 390-amino-acid polypeptide reads, in one-letter code: Bifunctional enzyme IspD/IspF (390 aa).

Residues 1–229 (MAAGRGERAG…RQDHAVFPDI (229 aa)) form a 2-C-methyl-D-erythritol 4-phosphate cytidylyltransferase region. The tract at residues 230–390 (RTGNGYDVHS…TVIYPGEVPE (161 aa)) is 2-C-methyl-D-erythritol 2,4-cyclodiphosphate synthase. 2 residues coordinate a divalent metal cation: D236 and H238. Residues 236 to 238 (DVH) and 262 to 263 (HS) contribute to the 4-CDP-2-C-methyl-D-erythritol 2-phosphate site. Position 270 (H270) interacts with a divalent metal cation. Residues 284 to 286 (DIG), 360 to 363 (TTNE), F367, and R370 each bind 4-CDP-2-C-methyl-D-erythritol 2-phosphate.

The protein in the N-terminal section; belongs to the IspD/TarI cytidylyltransferase family. IspD subfamily. This sequence in the C-terminal section; belongs to the IspF family. A divalent metal cation serves as cofactor.

It carries out the reaction 2-C-methyl-D-erythritol 4-phosphate + CTP + H(+) = 4-CDP-2-C-methyl-D-erythritol + diphosphate. It catalyses the reaction 4-CDP-2-C-methyl-D-erythritol 2-phosphate = 2-C-methyl-D-erythritol 2,4-cyclic diphosphate + CMP. The protein operates within isoprenoid biosynthesis; isopentenyl diphosphate biosynthesis via DXP pathway; isopentenyl diphosphate from 1-deoxy-D-xylulose 5-phosphate: step 2/6. It functions in the pathway isoprenoid biosynthesis; isopentenyl diphosphate biosynthesis via DXP pathway; isopentenyl diphosphate from 1-deoxy-D-xylulose 5-phosphate: step 4/6. Its function is as follows. Bifunctional enzyme that catalyzes the formation of 4-diphosphocytidyl-2-C-methyl-D-erythritol from CTP and 2-C-methyl-D-erythritol 4-phosphate (MEP) (IspD), and catalyzes the conversion of 4-diphosphocytidyl-2-C-methyl-D-erythritol 2-phosphate (CDP-ME2P) to 2-C-methyl-D-erythritol 2,4-cyclodiphosphate (ME-CPP) with a corresponding release of cytidine 5-monophosphate (CMP) (IspF). The chain is Bifunctional enzyme IspD/IspF from Brucella abortus biovar 1 (strain 9-941).